The primary structure comprises 327 residues: o-succinylbenzoate synthase (327 aa).

The active-site Proton donor is the K110. Residues D138, E165, and D188 each coordinate Mg(2+). The active-site Proton acceptor is K212.

It belongs to the mandelate racemase/muconate lactonizing enzyme family. MenC type 1 subfamily. A divalent metal cation is required as a cofactor.

It catalyses the reaction (1R,6R)-6-hydroxy-2-succinyl-cyclohexa-2,4-diene-1-carboxylate = 2-succinylbenzoate + H2O. The protein operates within quinol/quinone metabolism; 1,4-dihydroxy-2-naphthoate biosynthesis; 1,4-dihydroxy-2-naphthoate from chorismate: step 4/7. Its pathway is quinol/quinone metabolism; menaquinone biosynthesis. Functionally, converts 2-succinyl-6-hydroxy-2,4-cyclohexadiene-1-carboxylate (SHCHC) to 2-succinylbenzoate (OSB). The polypeptide is o-succinylbenzoate synthase (Mycobacterium ulcerans (strain Agy99)).